Here is a 232-residue protein sequence, read N- to C-terminus: Cytidylate kinase (232 aa).

An ATP-binding site is contributed by 11 to 19; that stretch reads GPAGAGKST.

The protein belongs to the cytidylate kinase family. Type 1 subfamily.

It is found in the cytoplasm. It catalyses the reaction CMP + ATP = CDP + ADP. It carries out the reaction dCMP + ATP = dCDP + ADP. This Roseiflexus castenholzii (strain DSM 13941 / HLO8) protein is Cytidylate kinase.